A 76-amino-acid polypeptide reads, in one-letter code: Translation initiation factor IF-1 (76 aa).

The 76-residue stretch at 1-76 folds into the S1-like domain; it reads MEDMAKKDGV…TRGRIVYRYK (76 aa).

This sequence belongs to the IF-1 family. Component of the 30S ribosomal translation pre-initiation complex which assembles on the 30S ribosome in the order IF-2 and IF-3, IF-1 and N-formylmethionyl-tRNA(fMet); mRNA recruitment can occur at any time during PIC assembly.

It localises to the cytoplasm. In terms of biological role, one of the essential components for the initiation of protein synthesis. Stabilizes the binding of IF-2 and IF-3 on the 30S subunit to which N-formylmethionyl-tRNA(fMet) subsequently binds. Helps modulate mRNA selection, yielding the 30S pre-initiation complex (PIC). Upon addition of the 50S ribosomal subunit IF-1, IF-2 and IF-3 are released leaving the mature 70S translation initiation complex. The sequence is that of Translation initiation factor IF-1 from Renibacterium salmoninarum (strain ATCC 33209 / DSM 20767 / JCM 11484 / NBRC 15589 / NCIMB 2235).